Consider the following 143-residue polypeptide: Transcriptional regulator MraZ (143 aa).

2 SpoVT-AbrB domains span residues 5–47 (EFEH…PMTE) and 76–119 (ATEC…SAER).

The protein belongs to the MraZ family. Forms oligomers.

The protein localises to the cytoplasm. Its subcellular location is the nucleoid. The protein is Transcriptional regulator MraZ of Levilactobacillus brevis (strain ATCC 367 / BCRC 12310 / CIP 105137 / JCM 1170 / LMG 11437 / NCIMB 947 / NCTC 947) (Lactobacillus brevis).